A 932-amino-acid chain; its full sequence is RNA-binding protein 12 (932 aa).

A disordered region spans residues 96-116 (DIPPANASRSGPPPSSGMSSR). A compositionally biased stretch (low complexity) spans 98-116 (PPANASRSGPPPSSGMSSR). Residues 304-379 (LYVSVHGMPF…RYVEVSPATE (76 aa)) enclose the RRM 1 domain. Phosphoserine occurs at positions 352 and 375. Polar residues-rich tracts occupy residues 392–401 (KQNMGPSGQT) and 408–417 (LPRSKSPSGQ). Residues 392-424 (KQNMGPSGQTHPPPQTLPRSKSPSGQKRSRSRS) are disordered. Residues Ser-420, Ser-422, and Ser-424 each carry the phosphoserine modification. The RRM 2 domain occupies 430 to 507 (FCVYLKGLPF…RFIQVHPITK (78 aa)). Ser-525 carries the phosphoserine modification. Residues 717 to 734 (NGPPFNFPGNFGGSNAFG) show a composition bias toward low complexity. Residues 717–853 (NGPPFNFPGN…PGFASSSGKP (137 aa)) are disordered. The span at 783–811 (SGFGGGPQNFGNGPGSLGGPPGFGSGPPG) shows a compositional bias: gly residues. The span at 824–836 (AFGPGPGPGPGPG) shows a compositional bias: pro residues. The RRM 3 domain occupies 856–932 (TVIKVQNMPF…GSRKVKLVLG (77 aa)).

It is found in the nucleus. The protein is RNA-binding protein 12 (RBM12) of Homo sapiens (Human).